The chain runs to 378 residues: Protein RecA (378 aa).

An ATP-binding site is contributed by 79–86; the sequence is GPESSGKT.

The protein belongs to the RecA family.

The protein localises to the cytoplasm. Its function is as follows. Can catalyze the hydrolysis of ATP in the presence of single-stranded DNA, the ATP-dependent uptake of single-stranded DNA by duplex DNA, and the ATP-dependent hybridization of homologous single-stranded DNAs. It interacts with LexA causing its activation and leading to its autocatalytic cleavage. The polypeptide is Protein RecA (Streptococcus pyogenes serotype M28 (strain MGAS6180)).